We begin with the raw amino-acid sequence, 67 residues long: Phycobilisome 7.8 kDa linker polypeptide, allophycocyanin-associated, core (67 aa).

Positions 1–56 (MRVFKVTACVPSQTRIRTQRELQNTYFTKLVPYDNWFREQQRIMKMGGKIVKVELA) constitute a CpcD-like domain.

The protein belongs to the phycobilisome linker protein family.

The protein localises to the cellular thylakoid membrane. In terms of biological role, rod linker protein, associated with allophycocyanin. Linker polypeptides determine the state of aggregation and the location of the disk-shaped phycobiliprotein units within the phycobilisome and modulate their spectroscopic properties in order to mediate a directed and optimal energy transfer. This chain is Phycobilisome 7.8 kDa linker polypeptide, allophycocyanin-associated, core (apcC), found in Arthrospira platensis (Spirulina platensis).